A 173-amino-acid chain; its full sequence is Alpha-crystallin A chain (173 aa).

Met-1 is subject to N-acetylmethionine. Positions 1–63 (MDIAIQHPWF…RSVLDSGISE (63 aa)) are required for complex formation with BFSP1 and BFSP2. Gln-6 is modified (deamidated glutamine; partial). Residue Ser-45 is modified to Phosphoserine. Gln-50 is modified (deamidated glutamine; partial). One can recognise a sHSP domain in the interval 52 to 162 (LFRSVLDSGI…GHSERAIPVS (111 aa)). The residue at position 70 (Lys-70) is an N6-acetyllysine. A Deamidated glutamine; partial modification is found at Gln-90. An N6-acetyllysine modification is found at Lys-99. His-100 is a Zn(2+) binding site. The residue at position 101 (Asn-101) is a Deamidated asparagine; partial. Glu-102 and His-107 together coordinate Zn(2+). Residue Ser-122 is modified to Phosphoserine. Asn-123 is modified (deamidated asparagine; partial). The disordered stretch occupies residues 144–173 (PKVTSGMDAGHSERAIPVSREEKPSSAPSS). Over residues 153–167 (GHSERAIPVSREEKP) the composition is skewed to basic and acidic residues. Position 154 (His-154) interacts with Zn(2+). Ser-162 carries an O-linked (GlcNAc) serine glycan.

The protein belongs to the small heat shock protein (HSP20) family. In terms of assembly, heteromer composed of three CRYAA and one CRYAB subunits. Inter-subunit bridging via zinc ions enhances stability, which is crucial as there is no protein turn over in the lens. Can also form homodimers and homotetramers (dimers of dimers) which serve as the building blocks of homooligomers. Within homooligomers, the zinc-binding motif is created from residues of 3 different molecules. His-100 and Glu-102 from one molecule are ligands of the zinc ion, and His-107 and His-154 residues from additional molecules complete the site with tetrahedral coordination geometry. Part of a complex required for lens intermediate filament formation composed of BFSP1, BFSP2 and CRYAA. In terms of processing, acetylation at Lys-70 may increase chaperone activity. Post-translationally, undergoes age-dependent proteolytical cleavage at the C-terminus.

It is found in the cytoplasm. It localises to the nucleus. In terms of biological role, contributes to the transparency and refractive index of the lens. Acts as a chaperone, preventing aggregation of various proteins under a wide range of stress conditions. Required for the correct formation of lens intermediate filaments as part of a complex composed of BFSP1, BFSP2 and CRYAA. This chain is Alpha-crystallin A chain (CRYAA), found in Phocoena phocoena (Harbor porpoise).